Reading from the N-terminus, the 514-residue chain is Bifunctional purine biosynthesis protein PurH (514 aa).

The 145-residue stretch at 1 to 145 (MIKRALISVS…KNYQDVAVIV (145 aa)) folds into the MGS-like domain.

It belongs to the PurH family.

The enzyme catalyses (6R)-10-formyltetrahydrofolate + 5-amino-1-(5-phospho-beta-D-ribosyl)imidazole-4-carboxamide = 5-formamido-1-(5-phospho-D-ribosyl)imidazole-4-carboxamide + (6S)-5,6,7,8-tetrahydrofolate. The catalysed reaction is IMP + H2O = 5-formamido-1-(5-phospho-D-ribosyl)imidazole-4-carboxamide. The protein operates within purine metabolism; IMP biosynthesis via de novo pathway; 5-formamido-1-(5-phospho-D-ribosyl)imidazole-4-carboxamide from 5-amino-1-(5-phospho-D-ribosyl)imidazole-4-carboxamide (10-formyl THF route): step 1/1. Its pathway is purine metabolism; IMP biosynthesis via de novo pathway; IMP from 5-formamido-1-(5-phospho-D-ribosyl)imidazole-4-carboxamide: step 1/1. In Ruminiclostridium cellulolyticum (strain ATCC 35319 / DSM 5812 / JCM 6584 / H10) (Clostridium cellulolyticum), this protein is Bifunctional purine biosynthesis protein PurH.